The primary structure comprises 208 residues: Pectinesterase inhibitor 6 (208 aa).

Positions 1–30 (MTSSSSSPITFTLLLLLSLLVALNPNPSLA) are cleaved as a signal peptide. Cys-53 and Cys-62 are oxidised to a cystine. N-linked (GlcNAc...) asparagine glycans are attached at residues Asn-54 and Asn-75. A disulfide bond links Cys-118 and Cys-165.

Belongs to the PMEI family.

The protein resides in the secreted. It localises to the extracellular space. The protein localises to the apoplast. In terms of biological role, pectin methylesterase (PME) inhibitor that targets PME from seeds and modulates PME activity and pectin methylesterification during seed germination. Promotes mucilage release by limiting methylesterification of homogalacturonan in seed coat epidermal cells. This Arabidopsis thaliana (Mouse-ear cress) protein is Pectinesterase inhibitor 6.